The sequence spans 310 residues: Probable deoxyhypusine synthase (310 aa).

The active-site Nucleophile is the Lys284.

This sequence belongs to the deoxyhypusine synthase family. It depends on NAD(+) as a cofactor.

The catalysed reaction is [eIF5A protein]-L-lysine + spermidine = [eIF5A protein]-deoxyhypusine + propane-1,3-diamine. The protein operates within protein modification; eIF5A hypusination. Catalyzes the NAD-dependent oxidative cleavage of spermidine and the subsequent transfer of the butylamine moiety of spermidine to the epsilon-amino group of a specific lysine residue of the eIF-5A precursor protein to form the intermediate deoxyhypusine residue. In Thermoplasma volcanium (strain ATCC 51530 / DSM 4299 / JCM 9571 / NBRC 15438 / GSS1), this protein is Probable deoxyhypusine synthase (dys).